Consider the following 1036-residue polypeptide: Nitrogen catabolic enzyme regulatory protein (1036 aa).

Residues 1-17 (MAASTTTPTATTRPFFT) show a composition bias toward low complexity. Disordered regions lie at residues 1–126 (MAAS…HTQS), 207–240 (TDRT…SQGS), 256–298 (TPAG…QSQH), 318–351 (GYLP…HVSA), 590–743 (SSQG…PTTC), 792–976 (RGSG…PTTQ), and 1000–1028 (GMPN…TGAE). Positions 23–34 (TEHDFRFPRRPG) are enriched in basic and acidic residues. Over residues 45–56 (AAMSSSSANNNH) the composition is skewed to low complexity. 3 repeat units span residues 49–55 (SSSANNN), 87–92 (SSSNNN), and 105–110 (SSSNNN). Residues 49 to 110 (SSSANNNHNQ…INHQSSSNNN (62 aa)) are 3 X approximate repeats. A compositionally biased stretch (low complexity) spans 100-114 (NINHQSSSNNNISKN). The segment covering 652-661 (PRSQSQSFRQ) has biased composition (polar residues). A compositionally biased stretch (low complexity) spans 703–714 (SSGLSSVPASRP). Residues 723–736 (QGSTTNLQGAAGNS) show a composition bias toward polar residues. A GATA-type zinc finger spans residues 743-767 (CTNCFTQTTPLWRRNPDGQPLCNAC). Positions 802 to 827 (GTSTRSKKNASMSAAARKNSTLSITS) are enriched in polar residues. Composition is skewed to low complexity over residues 828 to 861 (NANN…ASGP) and 868 to 899 (AGST…SAPP). The segment covering 927–961 (SAGSDQPVSAGAVSSSGMDVDSPANSTGSNETMPT) has biased composition (polar residues). Over residues 1000 to 1023 (GMPNGQAGQMMGASSSSGPGSGPS) the composition is skewed to low complexity.

In terms of assembly, interacts with nmr.

The protein localises to the nucleus. Its function is as follows. Major nitrogen regulatory protein. During conditions of nitrogen limitation it turns on the expression of genes for enzymes which are required for the use of a variety of secondary nitrogen sources, including nitrates, purines, amino acids, and proteins. This chain is Nitrogen catabolic enzyme regulatory protein (nit-2), found in Neurospora crassa (strain ATCC 24698 / 74-OR23-1A / CBS 708.71 / DSM 1257 / FGSC 987).